We begin with the raw amino-acid sequence, 628 residues long: NUAK family SNF1-like kinase 2 (628 aa).

Met1 bears the N-acetylmethionine mark. Positions 53–303 (YEFLETLGKG…LEDVASHWWV (251 aa)) constitute a Protein kinase domain. Residues 59 to 67 (LGKGTYGKV) and Lys81 contribute to the ATP site. Asp175 (proton acceptor) is an active-site residue. Thr208 bears the Phosphothreonine; by LKB1 mark. The interval 355–493 (KQHAPGGGST…KEQKPPQASG (139 aa)) is disordered. Residue Ser435 is modified to Phosphoserine. Low complexity predominate over residues 457–469 (SGYYSSPEPSESG). A phosphoserine mark is found at Ser523, Ser544, Ser547, and Ser573. Residues 531 to 562 (RPLARASRPSGAVSEDSILSSESFDQLDLPER) form a disordered region.

Belongs to the protein kinase superfamily. CAMK Ser/Thr protein kinase family. SNF1 subfamily. Requires Mg(2+) as cofactor. Post-translationally, phosphorylated at Thr-208 by STK11/LKB1 in complex with STE20-related adapter-alpha (STRADA) pseudo kinase and CAB39. Autophosphorylation is also possible at Thr-208.

The catalysed reaction is L-seryl-[protein] + ATP = O-phospho-L-seryl-[protein] + ADP + H(+). The enzyme catalyses L-threonyl-[protein] + ATP = O-phospho-L-threonyl-[protein] + ADP + H(+). Activated by phosphorylation on Thr-208. Its function is as follows. Stress-activated kinase involved in tolerance to glucose starvation. Induces cell-cell detachment by increasing F-actin conversion to G-actin. Expression is induced by CD95 or TNF-alpha, via NF-kappa-B. Protects cells from CD95-mediated apoptosis and is required for the increased motility and invasiveness of CD95-activated tumor cells. Phosphorylates LATS1 and LATS2. Plays a key role in neural tube closure during embryonic development through LATS2 phosphorylation and regulation of the nuclear localization of YAP1 a critical downstream regulatory target in the Hippo signaling pathway. This is NUAK family SNF1-like kinase 2 from Homo sapiens (Human).